Here is a 324-residue protein sequence, read N- to C-terminus: DGAT1/2-independent enzyme synthesizing storage lipids (324 aa).

Over 1 to 50 (MIDKNQTCGVGQDSVPYMICLIHILEEWFGVEQLEDYLNFANYLLWVFTP) the chain is Lumenal. N-linked (GlcNAc...) asparagine glycosylation is present at N5. Residues 51-71 (LILLILPYFTIFLLYLTIIFL) form a helical membrane-spanning segment. Residues 72 to 125 (HIYKRKNVLKEAYSHNLWDGARKTVATLWDGHAAVWHGYEVHGMEKIPEDGPAL) are Cytoplasmic-facing. Residues 126 to 146 (IIFYHGAIPIDFYYFMAKIFI) traverse the membrane as a helical segment. H130 is an active-site residue. Over 147–324 (HKGRTCRVVA…IMSALLERFH (178 aa)) the chain is Lumenal.

It belongs to the diacylglycerol acyltransferase family. Highly divergent.

The protein localises to the endoplasmic reticulum membrane. The catalysed reaction is a 1,2-diacylglycerol + a 1,2-diacyl-sn-glycero-3-phosphocholine = a triacylglycerol + a 1-acyl-sn-glycero-3-phosphocholine. It carries out the reaction a 1-O-alkyl-2-acyl-sn-glycero-3-phosphocholine + a 1,2-diacylglycerol = a 1-O-alkyl-sn-glycero-3-phosphocholine + a triacylglycerol. It catalyses the reaction a 2-acylglycerol + an acyl-CoA = a 1,2-diacylglycerol + CoA. The enzyme catalyses an acyl-CoA + a 1,2-diacyl-sn-glycerol = a triacyl-sn-glycerol + CoA. The catalysed reaction is 2-(9Z-octadecenoyl)-glycerol + (9Z)-octadecenoyl-CoA = 1,2-di-(9Z-octadecenoyl)-glycerol + CoA. It carries out the reaction 1,2-di-(9Z-octadecenoyl)-sn-glycerol + (9Z)-octadecenoyl-CoA = 1,2,3-tri-(9Z-octadecenoyl)-glycerol + CoA. Its activity is regulated as follows. Acyltransferase activity is specifically inhibited by TMX1 at the endoplasmic reticulum, restricting accumulation of triacylglycerol. Catalytic subunit of the alternative triglyceride biosynthesis pathway, which mediates formation of triacylglycerol from diacylglycerol and membrane phospholipids. Synthesizes triacylglycerol at the expense of membrane phospholipids, such as phosphatidylcholine (PC) and its ether-linked form (ePC), thereby altering the composition of membranes. The alternative triglyceride biosynthesis pathway is probably required to provide the energy required for rapid growth when fuel sources are limiting. It maintains mitochondrial function during periods of extracellular lipid starvation. Can also use acyl-CoA as donor: acts as a acyl-CoA:monoacylglycerol acyltransferase (MGAT), but also shows acyl-CoA:diacylglycerol acyltransferase (DGAT) activity. The sequence is that of DGAT1/2-independent enzyme synthesizing storage lipids from Homo sapiens (Human).